The chain runs to 456 residues: Iroquois-class homeodomain protein irx-2 (456 aa).

Positions 110–172 (DPAYRKNATR…NARRRLKKEN (63 aa)) form a DNA-binding region, homeobox; TALE-type. Disordered regions lie at residues 172 to 214 (NKMT…AEDE), 246 to 320 (CESG…PASK), and 434 to 456 (RPTN…QPYP). Composition is skewed to basic and acidic residues over residues 192–205 (GERV…KAQD) and 246–256 (CESGSESKEKY). Residues 257-269 (DDDEDEEEGDEED) are compositionally biased toward acidic residues. The segment covering 291 to 318 (NHQQDGSPRNSNKTSLDNGMSPSSQTPA) has biased composition (polar residues).

It belongs to the TALE/IRO homeobox family. In terms of tissue distribution, expressed in the neural plate in overlapping patterns with other irx members, which all share an anterior border of expression. Also expressed in the placodes. Broadly expressed in the tailbud rhombencephalon (hindbrain). Outside the nervous system and at tailbud stages, expressed in the developing otic vesicle, branchial arches, prospective heart region and pronephros.

It localises to the nucleus. Its function is as follows. Acts partially redundantly with other irx members in neural patterning. Required for formation of the posterior forebrain, midbrain, hindbrain, and to a lesser extent, spinal cord. Acts early in neural plate development to induce expression of some but not all proneural genes, and specify a neural precursor state. Also up-regulates repressors that prevent neuronal differentiation. Patterns the neuroectoderm in both the anterior/posterior and dorsal/ventral axes. Probably dispensable for pronephric kidney development. In Xenopus tropicalis (Western clawed frog), this protein is Iroquois-class homeodomain protein irx-2.